Reading from the N-terminus, the 550-residue chain is Carboxypeptidase Y homolog A (550 aa).

The first 18 residues, 1 to 18 (MKSLVLGLLVGSAIASGP), serve as a signal peptide directing secretion. A propeptide spanning residues 19-131 (LQHVLHAPPE…KLAQYDLRIR (113 aa)) is cleaved from the precursor. Cystine bridges form between C185–C424, C319–C333, C343–C366, C350–C359, and C388–C394. N216 is a glycosylation site (N-linked (GlcNAc...) asparagine). S272 is a catalytic residue. D463 is a catalytic residue. N-linked (GlcNAc...) asparagine glycans are attached at residues N493 and N514. H525 is an active-site residue.

It belongs to the peptidase S10 family.

It is found in the vacuole. It carries out the reaction Release of a C-terminal amino acid with broad specificity.. Its function is as follows. Vacuolar carboxypeptidase involved in degradation of small peptides. Digests preferentially peptides containing an aliphatic or hydrophobic residue in P1' position, as well as methionine, leucine or phenylalanine in P1 position of ester substrate. The sequence is that of Carboxypeptidase Y homolog A (CPYA) from Paracoccidioides lutzii (strain ATCC MYA-826 / Pb01) (Paracoccidioides brasiliensis).